The chain runs to 372 residues: MFEFEITSNCSNTAARTGIFHTPNGQVNTPKFMPVGTLATVKGISSKQLTSTGSEMILSNTFHLHLQPGEKLVKESGGIHKFMNWPKPILTDSGGYQVFSLAKLNNISDKGVEFKNPRDGSYVFLSPEKVIQIQMDLGSDVAMAFDHCPPHTANENDIEDSLQRTHSWLQKSVETHQKSNQALFGIVQGGKYPKLREYSAKYTSSFDLPGIAVGGVSVGETVEEIHSVINYVPKFLPIKKPRYLMGIGSLKEISLAVANGFDIFDCVLPTRLGRHGTAFFNDERLNLRNARFKNDFSPIDKTCKCETCKSYSRAYLHHLIRNDEILGLTLISLHNIAHLIRFTNAISTAIRDNCFTNDFAPWKTSSIAHHTW.

The active-site Proton acceptor is the D92. Substrate contacts are provided by residues D92–Y96, D146, Q188, and G215. The segment at G246 to E252 is RNA binding. Residue D265 is the Nucleophile of the active site. An RNA binding; important for wobble base 34 recognition region spans residues T270 to R274. Positions 303, 305, 308, and 334 each coordinate Zn(2+).

It belongs to the queuine tRNA-ribosyltransferase family. As to quaternary structure, homodimer. Within each dimer, one monomer is responsible for RNA recognition and catalysis, while the other monomer binds to the replacement base PreQ1. It depends on Zn(2+) as a cofactor.

It catalyses the reaction 7-aminomethyl-7-carbaguanine + guanosine(34) in tRNA = 7-aminomethyl-7-carbaguanosine(34) in tRNA + guanine. It functions in the pathway tRNA modification; tRNA-queuosine biosynthesis. Its function is as follows. Catalyzes the base-exchange of a guanine (G) residue with the queuine precursor 7-aminomethyl-7-deazaguanine (PreQ1) at position 34 (anticodon wobble position) in tRNAs with GU(N) anticodons (tRNA-Asp, -Asn, -His and -Tyr). Catalysis occurs through a double-displacement mechanism. The nucleophile active site attacks the C1' of nucleotide 34 to detach the guanine base from the RNA, forming a covalent enzyme-RNA intermediate. The proton acceptor active site deprotonates the incoming PreQ1, allowing a nucleophilic attack on the C1' of the ribose to form the product. After dissociation, two additional enzymatic reactions on the tRNA convert PreQ1 to queuine (Q), resulting in the hypermodified nucleoside queuosine (7-(((4,5-cis-dihydroxy-2-cyclopenten-1-yl)amino)methyl)-7-deazaguanosine). The chain is Queuine tRNA-ribosyltransferase from Prochlorococcus marinus (strain AS9601).